The primary structure comprises 558 residues: Poly(A) polymerase PAPalpha (558 aa).

Residues 1–17 show a composition bias toward polar residues; it reads MNTKTYGVTEPISTNGP. The segment at 1–20 is disordered; the sequence is MNTKTYGVTEPISTNGPTPK. Residues 86-88, 99-101, aspartate 153, lysine 214, tyrosine 223, and 232-233 contribute to the ATP site; these read FGS, DID, and GV. Aspartate 99, aspartate 101, and aspartate 153 together coordinate Mg(2+). The segment at 516–558 is disordered; that stretch reads VYEDGEERPKKSGKKRKKVIKEDGQKRVRNESPASSASVNGSS. Residues 535–545 show a composition bias toward basic and acidic residues; the sequence is IKEDGQKRVRN. Residues 547–558 show a composition bias toward low complexity; the sequence is SPASSASVNGSS.

This sequence belongs to the poly(A) polymerase family. It depends on Mg(2+) as a cofactor. Mn(2+) serves as cofactor.

The protein localises to the nucleus. The catalysed reaction is RNA(n) + ATP = RNA(n)-3'-adenine ribonucleotide + diphosphate. In terms of biological role, polymerase that creates the 3'-poly(A) tail of mRNA's. May acquire specificity through interaction with a cleavage and polyadenylation factor. The chain is Poly(A) polymerase PAPalpha (PAPALPHA) from Candida albicans (strain SC5314 / ATCC MYA-2876) (Yeast).